Reading from the N-terminus, the 272-residue chain is Indole-3-glycerol phosphate synthase (272 aa).

The protein belongs to the TrpC family.

The enzyme catalyses 1-(2-carboxyphenylamino)-1-deoxy-D-ribulose 5-phosphate + H(+) = (1S,2R)-1-C-(indol-3-yl)glycerol 3-phosphate + CO2 + H2O. It functions in the pathway amino-acid biosynthesis; L-tryptophan biosynthesis; L-tryptophan from chorismate: step 4/5. This Mycobacterium ulcerans (strain Agy99) protein is Indole-3-glycerol phosphate synthase.